We begin with the raw amino-acid sequence, 676 residues long: MSGGGDVVCTGWLRKSPPEKKLRRYAWKKRWFILRSGRMSGDPDVLEYYKNDHSKKPLRIINLNFCEQVDAGLTFNKKELQDSFVFDIKTSERTFYLVAETEEDMNKWVQSICQICGFNQAEESTDSLRNVSSAGHGPRSSPAELSSSSQHLLRERKSSAPSHSSQPTLFTFEPPVSNHMQPTLSTSAPQEYLYLHQCISRRAENARSASFSQGTRASFLMRSDTAVQKLAQGNGHCVNGISGQVHGFYSLPKPSRHNTEFRDSTYDLPRSLASHGHTKGSLTGSETDNEDVYTFKTPSNTLCREFGDLLVDNMDVPATPLSAYQIPRTFTLDKNHNAMTVATPGDSAIAPPPRPPKPSQAETPRWGSPQQRPPISENSRSVAATIPRRNTLPAMDNSRLHRASSCETYEYPQRGGESAGRSAESMSDGVGSFLPGKMIVGRSDSTNSEDNYVPMNPGSSTLLAMERAGDNSQSVYIPMSPGAHHFDSLGYPSTTLPVHRGPSRGSEIQPPPVNRNLKPDRKAKPTPLDLRNNTVIDELPFKSPITKSWSRANHTFNSSSSQYCRPISTQSITSTDSGDSEENYVPMQNPVSASPVPSGTNSPAPKKSTGSVDYLALDFQPSSPSPHRKPSTSSVTSDEKVDYVQVDKEKTQALQNTMQEWTDVRQSSEPSKGAKL.

Ser-2 is subject to Phosphoserine. In terms of domain architecture, PH spans 6-117 (DVVCTGWLRK…WVQSICQICG (112 aa)). The disordered stretch occupies residues 127 to 178 (SLRNVSSAGHGPRSSPAELSSSSQHLLRERKSSAPSHSSQPTLFTFEPPVSN). Residues Ser-133, Ser-140, Ser-141, Ser-148, Ser-149, Ser-159, Ser-164, Ser-210, Ser-218, Ser-223, and Ser-264 each carry the phosphoserine modification. A compositionally biased stretch (low complexity) spans 140–149 (SSPAELSSSS). Residues 159 to 169 (SAPSHSSQPTL) are compositionally biased toward polar residues. Position 265 is a phosphothreonine (Thr-265). Tyr-266 is subject to Phosphotyrosine. Phosphothreonine is present on Thr-278. Residues Ser-281 and Ser-285 each carry the phosphoserine modification. A Phosphothreonine modification is found at Thr-287. Tyr-293 carries the post-translational modification Phosphotyrosine. Residue Thr-331 is modified to Phosphothreonine. The interval 341–430 (VATPGDSAIA…RSAESMSDGV (90 aa)) is disordered. Positions 351–358 (PPPRPPKP) match the SH3-binding motif. The residue at position 368 (Ser-368) is a Phosphoserine. A phosphothreonine mark is found at Thr-385 and Thr-391. Ser-405 bears the Phosphoserine mark. Thr-408 is subject to Phosphothreonine. Phosphoserine occurs at positions 422 and 425. Residue Tyr-452 is modified to Phosphotyrosine. Ser-480 is modified (phosphoserine). A disordered region spans residues 492-531 (PSTTLPVHRGPSRGSEIQPPPVNRNLKPDRKAKPTPLDLR). An SH3-binding motif is present at residues 510 to 519 (PPPVNRNLKP). Ser-543 is modified (phosphoserine). Polar residues-rich tracts occupy residues 556-577 (FNSS…STDS) and 589-611 (NPVS…STGS). Disordered regions lie at residues 556–643 (FNSS…KVDY) and 656–676 (NTMQ…GAKL). Ser-622 and Ser-623 each carry phosphoserine. Tyr-643 is subject to Phosphotyrosine. Polar residues predominate over residues 656 to 670 (NTMQEWTDVRQSSEP).

Belongs to the GAB family. Part of a complex composed of EEIG1, TNFRSF11A/RANK, PLCG2, GAB2, TEC and BTK; complex formation increases in the presence of TNFSF11/RANKL. Interacts with SHC1; may mediate interaction with receptors. Interacts with SYK. Interacts with PI-3 kinase. Interacts with GRB2 (via SH3 2 domain). Interacts (phosphorylated) with PTPN11. Interacts with TNFRSF11A (via cytoplasmic domain). Interacts (phosphorylated) with 14-3-3 family proteins SFN, YWHAB, YWHAE, YWHAG, YWHAH, YWHAQ and YWHAZ; prevents interaction with GRB2 and attenuates GAB2 signaling. Interacts with HCK. Phosphorylated on tyrosine residue(s) by the thrombopoietin receptor (TPOR), stem cell factor receptor (SCFR), and T-cell and B-cell antigen receptors, gp130, IL-2R and IL-3R. Phosphorylated upon stimulation of TNFRSF11A/RANK by TNFSF11/RANKL. Phosphorylated upon EGF stimulation. Phosphorylated on tyrosine residues by HCK upon IL6 signaling. In terms of processing, dephosphorylated by PTPN11.

The protein localises to the cytoplasm. The protein resides in the cell membrane. Its subcellular location is the membrane raft. Adapter protein which acts downstream of several membrane receptors including cytokine, antigen, hormone, cell matrix and growth factor receptors to regulate multiple signaling pathways. Regulates osteoclast differentiation mediating the TNFRSF11A/RANK signaling. In allergic response, it plays a role in mast cells activation and degranulation through PI-3-kinase regulation. Also involved in the regulation of cell proliferation and hematopoiesis. The protein is GRB2-associated-binding protein 2 (GAB2) of Homo sapiens (Human).